Here is a 420-residue protein sequence, read N- to C-terminus: Diaminopimelate decarboxylase (420 aa).

Lys-54 carries the post-translational modification N6-(pyridoxal phosphate)lysine. His-191 provides a ligand contact to substrate. Residues Gly-227 and 268–271 (EPGR) contribute to the pyridoxal 5'-phosphate site. The substrate site is built by Arg-271, Arg-307, and Tyr-311. The active-site Proton donor is Cys-342. Substrate-binding residues include Glu-343 and Tyr-378. A pyridoxal 5'-phosphate-binding site is contributed by Tyr-378.

The protein belongs to the Orn/Lys/Arg decarboxylase class-II family. LysA subfamily. Pyridoxal 5'-phosphate serves as cofactor.

The enzyme catalyses meso-2,6-diaminopimelate + H(+) = L-lysine + CO2. Its pathway is amino-acid biosynthesis; L-lysine biosynthesis via DAP pathway; L-lysine from DL-2,6-diaminopimelate: step 1/1. Is activated by 2,3-dimercaptopropan-1-ol. Specifically catalyzes the decarboxylation of meso-diaminopimelate (meso-DAP) to L-lysine. Is not active against the DD- or LL-isomers of diaminopimelate. The polypeptide is Diaminopimelate decarboxylase (Escherichia coli (strain K12)).